Reading from the N-terminus, the 195-residue chain is FK506-binding protein 2 (195 aa).

The first 19 residues, 1-19 (MKAALFLSALASTAVGVVA), serve as a signal peptide directing secretion. The PPIase FKBP-type domain occupies 39 to 127 (GDGVHMHYRG…VFETELVGID (89 aa)). The short motif at 192-195 (HEEL) is the Prevents secretion from ER element.

This sequence belongs to the FKBP-type PPIase family. FKBP2 subfamily.

It is found in the endoplasmic reticulum. The enzyme catalyses [protein]-peptidylproline (omega=180) = [protein]-peptidylproline (omega=0). Its activity is regulated as follows. Inhibited by both FK506 and rapamycin. In terms of biological role, PPIases accelerate the folding of proteins. It catalyzes the cis-trans isomerization of proline imidic peptide bonds in oligopeptides. In Gibberella zeae (strain ATCC MYA-4620 / CBS 123657 / FGSC 9075 / NRRL 31084 / PH-1) (Wheat head blight fungus), this protein is FK506-binding protein 2 (FPR2).